Consider the following 246-residue polypeptide: MSEQIYGIHAVNSILTHSPERLIEVFVLKGREDKRLQPLLNELYSLGIGVQFVNRQTLDKKADGEVHQGVIARVQAAKELNENDLDEILANKQNPLLLVLDGVTDPHNLGACLRTADAAGAVAVIVPKDKSAQLTSIARKVACGAAETVPLIRVTNLSRTLRDLQQNHNIWVVGTAGEATETIYQSKLTGPLALVMGAEGEGMRRLTREHCDQLISIPMAGSVSSLNVSVATGVCLFEIVRQRLGS.

G197, I217, and L226 together coordinate S-adenosyl-L-methionine.

This sequence belongs to the class IV-like SAM-binding methyltransferase superfamily. RNA methyltransferase TrmH family. RlmB subfamily.

Its subcellular location is the cytoplasm. The catalysed reaction is guanosine(2251) in 23S rRNA + S-adenosyl-L-methionine = 2'-O-methylguanosine(2251) in 23S rRNA + S-adenosyl-L-homocysteine + H(+). In terms of biological role, specifically methylates the ribose of guanosine 2251 in 23S rRNA. The protein is 23S rRNA (guanosine-2'-O-)-methyltransferase RlmB of Haemophilus influenzae (strain ATCC 51907 / DSM 11121 / KW20 / Rd).